The following is a 289-amino-acid chain: Arabinogalactan O-methyltransferase 1 (289 aa).

A helical transmembrane segment spans residues 12–32; it reads IITGVLLAGLVGGALLFTSFI.

This sequence belongs to the methyltransferase superfamily. Binds to the translation initiation factors TIF3E1.

It is found in the golgi apparatus membrane. In terms of biological role, involved in the methylation of glucuronic acid of different plant cell wall component, but mainly on side chains of arabinogalactans. This Arabidopsis thaliana (Mouse-ear cress) protein is Arabinogalactan O-methyltransferase 1 (AGM1).